Here is a 309-residue protein sequence, read N- to C-terminus: Olfactory receptor 5AC2 (309 aa).

Over 1 to 27 (MDISEGNKTLVTEFVLTGLTDRPWLHV) the chain is Extracellular. The N-linked (GlcNAc...) asparagine glycan is linked to asparagine 7. Residues 28–48 (LFFVVFLVVYLITMVGNLGLI) traverse the membrane as a helical segment. The Cytoplasmic portion of the chain corresponds to 49 to 56 (VLIWNDPH). The helical transmembrane segment at 57–77 (LHMPMYLFLGGLAFSDACTST) threads the bilayer. The Extracellular segment spans residues 78-101 (SITPRMLVNFLDKTAMISLAECIT). Residues cysteine 99 and cysteine 191 are joined by a disulfide bond. Residues 102–122 (QFYFFASSATTECFLLVMMAY) traverse the membrane as a helical segment. Topologically, residues 123–135 (DRYVAICNPLLYP) are cytoplasmic. The helical transmembrane segment at 136–156 (VMMSNKLSAQLLSISYVIGFL) threads the bilayer. Residues 157–198 (HPLVHVSLLLRLTFCRFNIIHYFYCEILQLFKISCNGPSINA) lie on the Extracellular side of the membrane. A helical membrane pass occupies residues 199–219 (LMIFIFGAFIQIPTLMTIIIS). Topologically, residues 220-239 (YTRVLFDILKKKSEKGRSKA) are cytoplasmic. A helical membrane pass occupies residues 240–260 (FSTCGAHLLSVSLYYGTLIFM). The Extracellular segment spans residues 261 to 273 (YVRPASGLAEDQD). A helical membrane pass occupies residues 274-294 (KVYSLFYTIIIPLLNPFIYSL). Residues 295-309 (RNKKVMHALRRVIRK) lie on the Cytoplasmic side of the membrane.

Belongs to the G-protein coupled receptor 1 family.

The protein localises to the cell membrane. In terms of biological role, odorant receptor. This is Olfactory receptor 5AC2 (OR5AC2) from Homo sapiens (Human).